Here is an 899-residue protein sequence, read N- to C-terminus: Probable dipeptidyl-aminopeptidase B (899 aa).

A disordered region spans residues 1–69 (MKLDRMRVGS…NHNGRTQGNY (69 aa)). The Cytoplasmic portion of the chain corresponds to 1 to 99 (MKLDRMRVGS…NGKSSQRRTL (99 aa)). Low complexity predominate over residues 32-43 (DSSSTASISLTL). A helical; Signal-anchor for type II membrane protein membrane pass occupies residues 100–120 (IVFWLLVALCVGGWAVAFLFF). Residues 121 to 899 (VTSPGNKTST…KYFNLSFLGH (779 aa)) lie on the Vacuolar side of the membrane. A compositionally biased stretch (polar residues) spans 128–139 (TSTSPHSGSNSP). The tract at residues 128-149 (TSTSPHSGSNSPEGDVTKPGIP) is disordered. Residues Asn-212, Asn-308, and Asn-360 are each glycosylated (N-linked (GlcNAc...) asparagine). The active-site Charge relay system is Ser-765. N-linked (GlcNAc...) asparagine glycans are attached at residues Asn-819, Asn-824, and Asn-827. Active-site charge relay system residues include Asp-842 and His-875. Asn-893 carries N-linked (GlcNAc...) asparagine glycosylation.

This sequence belongs to the peptidase S9B family.

It localises to the vacuole membrane. The enzyme catalyses Release of an N-terminal dipeptide, Xaa-Yaa-|-Zaa-, from a polypeptide, preferentially when Yaa is Pro, provided Zaa is neither Pro nor hydroxyproline.. Type IV dipeptidyl-peptidase which removes N-terminal dipeptides sequentially from polypeptides having unsubstituted N-termini provided that the penultimate residue is proline. The protein is Probable dipeptidyl-aminopeptidase B (DAPB) of Trichophyton verrucosum (strain HKI 0517).